Reading from the N-terminus, the 356-residue chain is MTTPEDIIRRDVLAMTGYPVPDATGFVKLDAMENPYSLPAPLAAELGERLAHVALNRYPAPRPAALIDRLRAVTGVPAACDVLLGNGSDEIISMLAMACAKPGAKVLAPVPGFVMYELSAKFAQLEFVGVPLRADLTLDIDAMLAALAEHRPALVYLAYPNNPTGTLYPDEDVERIIAAAAASLVVIDEAYQPFAQRSWLPRAAQFDNVVVMRTMSKLGLAGIRLGYLVGLPAWLVQFDKVRPPYNVNVLTQAAAEFLLERVDVLDAQAAQLRDARTALAHAIGALPGATVFPSAGNFLLVRVPDAAAVFDVLLTERVLIKNVSKMHPLLANCVRVTVGSPEENARLLAALKLALP.

The residue at position 217 (Lys-217) is an N6-(pyridoxal phosphate)lysine.

It belongs to the class-II pyridoxal-phosphate-dependent aminotransferase family. Histidinol-phosphate aminotransferase subfamily. As to quaternary structure, homodimer. It depends on pyridoxal 5'-phosphate as a cofactor.

It carries out the reaction L-histidinol phosphate + 2-oxoglutarate = 3-(imidazol-4-yl)-2-oxopropyl phosphate + L-glutamate. Its pathway is amino-acid biosynthesis; L-histidine biosynthesis; L-histidine from 5-phospho-alpha-D-ribose 1-diphosphate: step 7/9. This is Histidinol-phosphate aminotransferase 1 from Burkholderia mallei (strain ATCC 23344).